Reading from the N-terminus, the 123-residue chain is Small ribosomal subunit protein uS12cz/uS12cy (123 aa).

It belongs to the universal ribosomal protein uS12 family. As to quaternary structure, part of the 30S ribosomal subunit.

The protein resides in the plastid. The protein localises to the chloroplast. With S4 and S5 plays an important role in translational accuracy. Located at the interface of the 30S and 50S subunits. The sequence is that of Small ribosomal subunit protein uS12cz/uS12cy (rps12-A) from Platanus occidentalis (Sycamore).